A 309-amino-acid chain; its full sequence is Protein FdhE homolog (309 aa).

The tract at residues 1-22 (MSIRIVPQEQLEQNGKSTPEGH) is disordered.

Belongs to the FdhE family.

It is found in the cytoplasm. Functionally, necessary for formate dehydrogenase activity. This Pectobacterium carotovorum subsp. carotovorum (strain PC1) protein is Protein FdhE homolog.